Here is a 227-residue protein sequence, read N- to C-terminus: Ribose-5-phosphate isomerase A (227 aa).

Substrate contacts are provided by residues 26–29 (TGST), 82–85 (DGAD), and 95–98 (KGGG). Glu104 (proton acceptor) is an active-site residue. Substrate is bound at residue Lys122.

The protein belongs to the ribose 5-phosphate isomerase family. Homodimer.

The catalysed reaction is aldehydo-D-ribose 5-phosphate = D-ribulose 5-phosphate. The protein operates within carbohydrate degradation; pentose phosphate pathway; D-ribose 5-phosphate from D-ribulose 5-phosphate (non-oxidative stage): step 1/1. Catalyzes the reversible conversion of ribose-5-phosphate to ribulose 5-phosphate. The polypeptide is Ribose-5-phosphate isomerase A (Streptococcus pneumoniae (strain ATCC 700669 / Spain 23F-1)).